The sequence spans 33 residues: Cysteine-rich venom protein tripurin (33 aa).

The protein belongs to the CRISP family. Post-translationally, contains 8 disulfide bonds. Expressed by the venom gland.

It is found in the secreted. Functionally, blocks contraction of smooth muscle elicited by high potassium-induced depolarization, but does not block caffeine-stimulated contraction. May target voltage-gated calcium channels on smooth muscle. The protein is Cysteine-rich venom protein tripurin of Trimeresurus purpureomaculatus (Mangrove pit viper).